The primary structure comprises 371 residues: Macronuclear solute carrier homolog CR-MSC (371 aa).

3 Solcar repeats span residues 16–111 (RMNY…FYDK), 120–208 (ARPD…CKEN), and 215–304 (PHWI…LSQF). Transmembrane regions (helical) follow at residues 22 to 42 (FAAA…LDMV), 89 to 109 (TFFF…GYFY), 126 to 146 (VAAG…IDIV), 184 to 204 (AGAN…IYDW), 221 to 241 (LWGT…FDMI), and 281 to 301 (FGSF…ICYL).

The protein belongs to the mitochondrial carrier (TC 2.A.29) family.

It localises to the membrane. This Oxytricha trifallax (Sterkiella histriomuscorum) protein is Macronuclear solute carrier homolog CR-MSC.